The sequence spans 92 residues: Small ribosomal subunit protein uS17 (92 aa).

The protein belongs to the universal ribosomal protein uS17 family. As to quaternary structure, part of the 30S ribosomal subunit.

Its function is as follows. One of the primary rRNA binding proteins, it binds specifically to the 5'-end of 16S ribosomal RNA. The protein is Small ribosomal subunit protein uS17 of Cupriavidus necator (strain ATCC 17699 / DSM 428 / KCTC 22496 / NCIMB 10442 / H16 / Stanier 337) (Ralstonia eutropha).